The chain runs to 462 residues: UDP-N-acetylmuramoylalanine--D-glutamate ligase (462 aa).

118–124 (GTNGKST) is an ATP binding site.

This sequence belongs to the MurCDEF family.

Its subcellular location is the cytoplasm. It catalyses the reaction UDP-N-acetyl-alpha-D-muramoyl-L-alanine + D-glutamate + ATP = UDP-N-acetyl-alpha-D-muramoyl-L-alanyl-D-glutamate + ADP + phosphate + H(+). It functions in the pathway cell wall biogenesis; peptidoglycan biosynthesis. Cell wall formation. Catalyzes the addition of glutamate to the nucleotide precursor UDP-N-acetylmuramoyl-L-alanine (UMA). The chain is UDP-N-acetylmuramoylalanine--D-glutamate ligase from Anaeromyxobacter dehalogenans (strain 2CP-C).